A 561-amino-acid polypeptide reads, in one-letter code: Arginine--tRNA ligase (561 aa).

A 'HIGH' region motif is present at residues 129 to 139 (ANPTGPLHVGH).

This sequence belongs to the class-I aminoacyl-tRNA synthetase family. Monomer.

It localises to the cytoplasm. It carries out the reaction tRNA(Arg) + L-arginine + ATP = L-arginyl-tRNA(Arg) + AMP + diphosphate. This chain is Arginine--tRNA ligase, found in Polaromonas sp. (strain JS666 / ATCC BAA-500).